The chain runs to 1168 residues: MAPVYEGMASHVQVFSPHTLQSSAFCSVKKLKVEPSSNWDMTGYGSHSKLCSQSKNIPPSQPASTTVSTSLPIPNPSLPYEQTIIFPGSTGHIVVTSASSTSVTGQVLGGPHNLMRRSTVSLLDTYQKCGLKRKSEEIENTSSVQIIEEHPPMIQNNASGATVATATTSTATSKNSGSNSEGDYQLVQHEVLCSMTNTYEVLEFLGRGTFGQVVKCWKRGTNEIVAIKILKNHPSYARQGQIEVSILARLSTESADDYNFVRAYECFQHKNHTCLVFEMLEQNLYDFLKQNKFSPLPLKYIRPVLQQVATALMKLKSLGLIHADLKPENIMLVDPSRQPYRVKVIDFGSASHVSKAVCSTYLQSRYYRAPEIILGLPFCEAIDMWSLGCVIAELFLGWPLYPGASEYDQIRYISQTQGLPAEYLLSAGTKTTRFFNRDTDSPYPLWRLKTPDDHEAETGIKSKEARKYIFNCLDDMAQVSMTTDLEGSDMLVEKADRREFIDLLKKMLTIDADKRITPIETLNHPFVTMTHLLDFPHSTHVKSCFQNMEICKRRVNMYDTVNQSKTPFITHVAPSTSTNLTMTFNNQLTTVHNQPSAASMAAVAQRSMPLQTGTAQICARPDPFQQALIVCPPGFQGLQASPSKHAGYSVRMENAVPIVTQAPGAQPLQIQPGLLAQAWPGGAQQILLPPAWQQLTGVATHTSVQHAAVIPETMAGTQQLADWRNTHAHGSHYNPIMQQPTLLTGHVTLPAAQPLNVGVAHVMRQQPTSTTSSRKSKQHQPSMRNVSTCEVTSSQSTSSPQRSKRVKENTPPRCAMVHSSPACSTSVTCGWGDVASSTTRERQRQTIVIPDTPSPTVSVITISSDTDEEEEQKHAPTSTVSKQRKNVISCVTVHDSPYSDSSSNTSPYSVQQRTGHNGTNTLDTKGALENHCTGNPRTIIVPPLKTQASEVLVECDSLGPAVSTGHHSSSFKCKSSSTVTSTSGHSSGSSSGAIAYRQQRPGPHFQQQQPLNLSQAQPHMATDRTGSHRRQQAYITPTMAQAPYTFPHNSPSHGTVHPHLAAAAHLPTQPHLYTYTAPTALGSTGTVAHLVASQGSARHTVQHTAYPASIVHQVPVSMGPRVLPSPTIHPSQYPAQFAHQTYISASPASTVYTGYPLSPAKVNQYPYI.

Residue Ser-16 is modified to Phosphoserine. Lys-32 participates in a covalent cross-link: Glycyl lysine isopeptide (Lys-Gly) (interchain with G-Cter in SUMO); alternate. Lys-32 participates in a covalent cross-link: Glycyl lysine isopeptide (Lys-Gly) (interchain with G-Cter in SUMO2); alternate. Positions 97-230 (SASSTSVTGQ…TNEIVAIKIL (134 aa)) are transcriptional corepression. 2 positions are modified to phosphoserine: Ser-118 and Ser-135. At Thr-141 the chain carries Phosphothreonine. The interval 189–520 (HEVLCSMTNT…DADKRITPIE (332 aa)) is interaction with DAXX. The region spanning 199 to 527 (YEVLEFLGRG…PIETLNHPFV (329 aa)) is the Protein kinase domain. ATP is bound by residues 205–213 (LGRGTFGQV) and Lys-228. Phosphothreonine is present on residues Thr-252 and Thr-273. Catalysis depends on Asp-324, which acts as the Proton acceptor. Position 361 is a phosphotyrosine (Tyr-361). Residue Ser-441 is modified to Phosphoserine. Phosphothreonine is present on residues Thr-482, Thr-517, and Thr-566. The segment at 539 to 816 (THVKSCFQNM…KENTPPRCAM (278 aa)) is interaction with SKI and SMAD1. The interaction with DAZAP2 stretch occupies residues 595 to 772 (PSAASMAAVA…MRQQPTSTTS (178 aa)). Residues Ser-607 and Ser-641 each carry the phosphoserine modification. Thr-660 is subject to Phosphothreonine. The interaction with POU4F1 stretch occupies residues 724-869 (RNTHAHGSHY…ITISSDTDEE (146 aa)). Residues 746–848 (HVTLPAAQPL…TRERQRQTIV (103 aa)) form an interaction with CTBP1 region. An interaction with HMGA1 region spans residues 759-869 (VAHVMRQQPT…ITISSDTDEE (111 aa)). A disordered region spans residues 764-820 (RQQPTSTTSSRKSKQHQPSMRNVSTCEVTSSQSTSSPQRSKRVKENTPPRCAMVHSS). Over residues 765–791 (QQPTSTTSSRKSKQHQPSMRNVSTCEV) the composition is skewed to polar residues. The Nuclear localization signal 1 (NLS1) motif lies at 774-777 (RKSK). Ser-787 and Ser-799 each carry phosphoserine. Low complexity predominate over residues 792–801 (TSSQSTSSPQ). Residues 804 to 807 (KRVK) carry the Nuclear localization signal 2 (NLS2) motif. Residues 812–907 (PRCAMVHSSP…YSDSSSNTSP (96 aa)) form an interaction with TP53 and TP73 region. Residues 845–879 (QTIVIPDTPSPTVSVITISSDTDEEEEQKHAPTST) form an interaction with UBE2I region. The localization to nuclear speckles stretch occupies residues 845–952 (QTIVIPDTPS…PLKTQASEVL (108 aa)). Residues 845–952 (QTIVIPDTPS…PLKTQASEVL (108 aa)) form a required for localization to nuclear speckles region. The segment at 854–876 (SPTVSVITISSDTDEEEEQKHAP) is interaction with UBL1. The tract at residues 856–880 (TVSVITISSDTDEEEEQKHAPTSTV) is SUMO interaction motifs (SIM); required for nuclear localization and kinase activity. Residues 894–936 (HDSPYSDSSSNTSPYSVQQRTGHNGTNTLDTKGALENHCTGNP) form a disordered region. The span at 895-909 (DSPYSDSSSNTSPYS) shows a compositional bias: low complexity. The residue at position 906 (Ser-906) is a Phosphoserine. The interaction with AXIN1 stretch occupies residues 907–1022 (PYSVQQRTGH…LSQAQPHMAT (116 aa)). The segment covering 910–923 (VQQRTGHNGTNTLD) has biased composition (polar residues). Residues Lys-925 and Lys-945 each participate in a glycyl lysine isopeptide (Lys-Gly) (interchain with G-Cter in SUMO2) cross-link. Residues 956-1168 (DSLGPAVSTG…PAKVNQYPYI (213 aa)) are autoinhibitory domain (AID). Residues 960–1030 (PAVSTGHHSS…ATDRTGSHRR (71 aa)) are disordered. Phosphoserine is present on Ser-963. 2 stretches are compositionally biased toward low complexity: residues 965-991 (GHHS…GSSS) and 998-1018 (QQRP…QAQP). Phosphoserine occurs at positions 1014, 1125, and 1158. A Glycyl lysine isopeptide (Lys-Gly) (interchain with G-Cter in SUMO) cross-link involves residue Lys-1161.

It belongs to the protein kinase superfamily. CMGC Ser/Thr protein kinase family. HIPK subfamily. In terms of assembly, interacts with CREB1, SIAH1, WSB1, CBX4, TRADD, p53/TP53, TP73, TP63, CREBBP, DAXX, P53DINP1, SKI, SMAD1, SMAD2 and SMAD3, but not SMAD4. Interacts with ATF1, PML, RUNX1, EP300, NKX1-2, NKX2-5, UBE2I, HMGA1, CTBP1, AXIN1, NLK, MYB, POU4F1, POU4F2, POU4F3, UBE2I, UBL1 and ZBTB4. Probably part of a complex consisting of p53/TP53, HIPK2 and AXIN1. Interacts with SP100; positively regulates TP53-dependent transcription. Interacts with DAZAP2; the interaction results in phosphorylation of DAZAP2 which causes localization of DAZAP2 to the nucleus, reduces interaction of DAZAP2 with HIPK2 and prevents DAZAP2-dependent degradation of HIPK2. Interacts with SIAH1; the interaction is promoted by DAZAP2 and results in SIAH1-mediated ubiquitination and subsequent proteasomal degradation of HIPK2. Autophosphorylation at Tyr-361 in the activation loop activates the kinase and promotes nuclear localization. In terms of processing, sumoylated. When conjugated it is directed to nuclear speckles. Desumoylated by SENP1. Sumoylation on Lys-32 is promoted by the E3 SUMO-protein ligase CBX4. Post-translationally, ubiquitinated by FBXO3, WSB1 and SIAH1, leading to rapid proteasome-dependent degradation. The degradation mediated by FBXO3, but not ubiquitination, is prevented in the presence of PML. The degradation mediated by WSB1 and SIAH1 is reversibly reduced upon DNA damage. Cleaved at Asp-895 and Asp-956 by CASP6 in a p53/TP53-dependent manner. The cleaved form lacks the autoinhibitory C-terminal domain (AID), resulting in a hyperactive kinase, which potentiates p53/TP53 Ser-46 phosphorylation and subsequent activation of the cell death machinery.

It is found in the nucleus. The protein resides in the PML body. Its subcellular location is the cytoplasm. The catalysed reaction is L-seryl-[protein] + ATP = O-phospho-L-seryl-[protein] + ADP + H(+). The enzyme catalyses L-threonyl-[protein] + ATP = O-phospho-L-threonyl-[protein] + ADP + H(+). In terms of biological role, serine/threonine-protein kinase involved in transcription regulation, p53/TP53-mediated cellular apoptosis and regulation of the cell cycle. Acts as a corepressor of several transcription factors, including SMAD1 and POU4F1/Brn3a and probably NK homeodomain transcription factors. Phosphorylates PDX1, ATF1, PML, p53/TP53, CREB1, CTBP1, CBX4, RUNX1, EP300, CTNNB1, HMGA1, ZBTB4 and DAZAP2. Inhibits cell growth and promotes apoptosis through the activation of p53/TP53 both at the transcription level and at the protein level (by phosphorylation and indirect acetylation). The phosphorylation of p53/TP53 may be mediated by a p53/TP53-HIPK2-AXIN1 complex. Involved in the response to hypoxia by acting as a transcriptional co-suppressor of HIF1A. Mediates transcriptional activation of TP73. In response to TGFB, cooperates with DAXX to activate JNK. Negative regulator through phosphorylation and subsequent proteasomal degradation of CTNNB1 and the antiapoptotic factor CTBP1. In the Wnt/beta-catenin signaling pathway acts as an intermediate kinase between MAP3K7/TAK1 and NLK to promote the proteasomal degradation of MYB. Phosphorylates CBX4 upon DNA damage and promotes its E3 SUMO-protein ligase activity. Activates CREB1 and ATF1 transcription factors by phosphorylation in response to genotoxic stress. In response to DNA damage, stabilizes PML by phosphorylation. PML, HIPK2 and FBXO3 may act synergically to activate p53/TP53-dependent transactivation. Promotes angiogenesis, and is involved in erythroid differentiation, especially during fetal liver erythropoiesis. Phosphorylation of RUNX1 and EP300 stimulates EP300 transcription regulation activity. Triggers ZBTB4 protein degradation in response to DNA damage. In response to DNA damage, phosphorylates DAZAP2 which localizes DAZAP2 to the nucleus, reduces interaction of DAZAP2 with HIPK2 and prevents DAZAP2-dependent ubiquitination of HIPK2 by E3 ubiquitin-protein ligase SIAH1 and subsequent proteasomal degradation. Modulates HMGA1 DNA-binding affinity. In response to high glucose, triggers phosphorylation-mediated subnuclear localization shifting of PDX1. Involved in the regulation of eye size, lens formation and retinal lamination during late embryogenesis. The protein is Homeodomain-interacting protein kinase 2 (Hipk2) of Mesocricetus auratus (Golden hamster).